Here is a 406-residue protein sequence, read N- to C-terminus: Phosphopentomutase (406 aa).

The Mn(2+) site is built by Asp-10, Asp-305, His-310, Asp-346, His-347, and His-358.

This sequence belongs to the phosphopentomutase family. Requires Mn(2+) as cofactor.

It is found in the cytoplasm. It carries out the reaction 2-deoxy-alpha-D-ribose 1-phosphate = 2-deoxy-D-ribose 5-phosphate. The catalysed reaction is alpha-D-ribose 1-phosphate = D-ribose 5-phosphate. The protein operates within carbohydrate degradation; 2-deoxy-D-ribose 1-phosphate degradation; D-glyceraldehyde 3-phosphate and acetaldehyde from 2-deoxy-alpha-D-ribose 1-phosphate: step 1/2. Functionally, isomerase that catalyzes the conversion of deoxy-ribose 1-phosphate (dRib-1-P) and ribose 1-phosphate (Rib-1-P) to deoxy-ribose 5-phosphate (dRib-5-P) and ribose 5-phosphate (Rib-5-P), respectively. The sequence is that of Phosphopentomutase from Rhizobium rhizogenes (strain K84 / ATCC BAA-868) (Agrobacterium radiobacter).